A 133-amino-acid chain; its full sequence is Small ribosomal subunit protein uS8 (133 aa).

The protein belongs to the universal ribosomal protein uS8 family. As to quaternary structure, part of the 30S ribosomal subunit. Contacts proteins S5 and S12.

Functionally, one of the primary rRNA binding proteins, it binds directly to 16S rRNA central domain where it helps coordinate assembly of the platform of the 30S subunit. This Synechocystis sp. (strain ATCC 27184 / PCC 6803 / Kazusa) protein is Small ribosomal subunit protein uS8.